The primary structure comprises 74 residues: Cytochrome b559 subunit alpha (74 aa).

Residues 22–36 (VIHTVTIPSLFVAGW) traverse the membrane as a helical segment. Heme is bound at residue His24.

The protein belongs to the PsbE/PsbF family. In terms of assembly, heterodimer of an alpha subunit and a beta subunit. PSII is composed of 1 copy each of membrane proteins PsbA, PsbB, PsbC, PsbD, PsbE, PsbF, PsbH, PsbI, PsbJ, PsbK, PsbL, PsbM, PsbT, PsbX, PsbY, PsbZ, Psb30/Ycf12, at least 3 peripheral proteins of the oxygen-evolving complex and a large number of cofactors. It forms dimeric complexes. Heme b is required as a cofactor.

It localises to the plastid. The protein localises to the cyanelle thylakoid membrane. This b-type cytochrome is tightly associated with the reaction center of photosystem II (PSII). PSII is a light-driven water:plastoquinone oxidoreductase that uses light energy to abstract electrons from H(2)O, generating O(2) and a proton gradient subsequently used for ATP formation. It consists of a core antenna complex that captures photons, and an electron transfer chain that converts photonic excitation into a charge separation. The polypeptide is Cytochrome b559 subunit alpha (Cyanophora paradoxa).